Here is a 607-residue protein sequence, read N- to C-terminus: Cyclic-di-GMP receptor FimW (607 aa).

The pilZ-like domain stretch occupies residues 323 to 492 (ERTFQRTQGQ…GGTQMGIEMI (170 aa)). The short motif at 324-328 (RTFQR) is the RXXXR motif element. The D/NXSXXG motif signature appears at 435–440 (NHSPGG). A compositionally biased stretch (polar residues) spans 568–582 (SQFEYRSAEPVNTPS). Residues 568–607 (SQFEYRSAEPVNTPSDKPVTAPVARPPAGEEDFDSLWKSL) form a disordered region.

Monomer in the absence of c-di-GMP. Forms dimers in the presence of c-di-GMP.

It is found in the cytoplasm. Functionally, high-affinity cyclic-di-GMP binding protein that regulates type IV pili (T4P) elongation. Required for T4P-mediated surface attachment and walking motility during the early phases of surface colonization. Not required for twitching motility. Does not bind related nucleotides such as GMP, GDP, GTP or ATP. This is Cyclic-di-GMP receptor FimW from Pseudomonas aeruginosa (strain ATCC 15692 / DSM 22644 / CIP 104116 / JCM 14847 / LMG 12228 / 1C / PRS 101 / PAO1).